Reading from the N-terminus, the 418-residue chain is Ankyrin repeat and SOCS box protein 6 (418 aa).

6 ANK repeats span residues 65–95, 100–129, 134–164, 168–203, 224–253, and 258–287; these read EGVS…NLNF, TYYT…DINR, HESS…DVNA, NGKT…DVKA, CGDK…DPSE, and ESLT…AYNC. Residues 358-413 enclose the SOCS box domain; it reads ALHASLRQLESYPPPLKHLCRVSIRLCLRPWPVDTKVKALPLPDRLKWYLLSAHSD.

Belongs to the ankyrin SOCS box (ASB) family. As to quaternary structure, binds APS. Identified in a complex with ELOB and ELOC. Interacts with CUL5 and RNF7. Interacts with SQSTM1. Detected in adipocytes.

It localises to the cytoplasm. Its pathway is protein modification; protein ubiquitination. Probable substrate-recognition component of a SCF-like ECS (Elongin-Cullin-SOCS-box protein) E3 ubiquitin-protein ligase complex which mediates the ubiquitination and subsequent proteasomal degradation of target proteins. May play a role in the regulation of cell proliferation and autophagy by promoting the ubiquitination and degradation of SQSTM1. This chain is Ankyrin repeat and SOCS box protein 6 (Asb6), found in Mus musculus (Mouse).